The sequence spans 199 residues: LTGLFLAMHYTPDVESAFASVAHICRDVNFGWLIRNLHANGASFFFICIYFHIGRGLYYGSYLYKETWNIGVVLLLLVMMTAFVGYVLPWGQMSFWGATVITNLLSAVPYVGTTLVEWIWGGFSVDNATLTRFFAFHFLFPFVILAMTILHLLFLHETGSNNPIGLNSNADKISFHPYFSYKDLLGFAILLVALASLAH.

4 consecutive transmembrane segments (helical) span residues 1–8 (LTGLFLAM), 32–53 (WLIR…YFHI), 68–88 (WNIG…GYVL), and 133–153 (FFAF…LHLL). Residues His38 and His52 each coordinate heme b. The heme b site is built by His137 and His151. An a ubiquinone-binding site is contributed by His156. The helical transmembrane segment at 181–199 (YKDLLGFAILLVALASLAH) threads the bilayer.

It belongs to the cytochrome b family. The cytochrome bc1 complex contains 3 respiratory subunits (MT-CYB, CYC1 and UQCRFS1), 2 core proteins (UQCRC1 and UQCRC2) and probably 6 low-molecular weight proteins. Heme b is required as a cofactor.

The protein resides in the mitochondrion inner membrane. Its function is as follows. Component of the ubiquinol-cytochrome c reductase complex (complex III or cytochrome b-c1 complex) that is part of the mitochondrial respiratory chain. The b-c1 complex mediates electron transfer from ubiquinol to cytochrome c. Contributes to the generation of a proton gradient across the mitochondrial membrane that is then used for ATP synthesis. This is Cytochrome b (mt-cyb) from Sarda chiliensis (Pacific bonito).